The primary structure comprises 373 residues: MGAQAPLRLPAAPPLAVCGYTSVLLLFAFCLPGSGASNQPAGGGGDCPGGRGKSINCSELNLRESDIRACDESSCKYGGVCKEDGDGLKCACQFQCHTNYIPVCGSNGDTYQNECFLRRAACKHQKDITVVARGPCYSDNGSGSGEGEEEGSGAGAHRKHSKCGPCKYKAECDEDAENVGCVCNIDCSGYSFNPVCASDGSSYNNPCFVREASCIRQEQIDIRHLGHCTDTDDTSLLGKKDDGLQYRPDVKDAGDQREDVYIGSHMPCPENLNGYCIHGKCEFIYSTQKASCRCESGYTGQHCEKTDFSILYVVPSRQKLTHVLIAAIIGAVQIAIIVAIVMCITRKCPKNNRGRRQKQNLGHFTSETSSRMV.

An N-terminal signal peptide occupies residues 1-36; the sequence is MGAQAPLRLPAAPPLAVCGYTSVLLLFAFCLPGSGA. Topologically, residues 37-323 are extracellular; it reads SNQPAGGGGD…VPSRQKLTHV (287 aa). A glycan (N-linked (GlcNAc...) asparagine) is linked at Asn56. The Kazal-like 1 domain maps to 91-138; the sequence is ACQFQCHTNYIPVCGSNGDTYQNECFLRRAACKHQKDITVVARGPCYS. Cystine bridges form between Cys92–Cys122, Cys96–Cys115, and Cys104–Cys136. N-linked (GlcNAc...) asparagine glycosylation occurs at Asn140. The disordered stretch occupies residues 140 to 162; it reads NGSGSGEGEEEGSGAGAHRKHSK. One can recognise a Kazal-like 2 domain in the interval 182-230; the sequence is VCNIDCSGYSFNPVCASDGSSYNNPCFVREASCIRQEQIDIRHLGHCTD. 6 disulfides stabilise this stretch: Cys183–Cys214, Cys187–Cys207, Cys196–Cys228, Cys268–Cys281, Cys276–Cys292, and Cys294–Cys303. Positions 264 to 304 constitute an EGF-like domain; that stretch reads SHMPCPENLNGYCIHGKCEFIYSTQKASCRCESGYTGQHCE. Residues 324-344 form a helical membrane-spanning segment; sequence LIAAIIGAVQIAIIVAIVMCI. Over 345 to 373 the chain is Cytoplasmic; the sequence is TRKCPKNNRGRRQKQNLGHFTSETSSRMV. The interval 352–373 is disordered; that stretch reads NRGRRQKQNLGHFTSETSSRMV. Positions 359 to 373 are enriched in polar residues; that stretch reads QNLGHFTSETSSRMV.

It belongs to the tomoregulin family. As to quaternary structure, may interact with ST14.

The protein localises to the cell membrane. Its function is as follows. Neuron-specific restriction factor that prevents herpes simplex virus 1 (HHV-1) infection in the brain by blocking viral entry. Also able to restrict herpes simplex virus 2 (HHV-2) infection, although to a lesser extent. Acts by preventing the association between the viral glycoprotein D (gD) and its cell surface receptor NECTIN1, thereby inhibiting fusion of the virus and the cell membrane. Also able to prevent the association between the viral glycoprotein B (gB) and MYH9/NMMHC-IIA and MYH10/NMMHC-IIB receptors. The polypeptide is Tomoregulin-1 (Tmeff1) (Rattus norvegicus (Rat)).